A 153-amino-acid polypeptide reads, in one-letter code: ATP synthase subunit b' (153 aa).

Residues 23–40 (LMAIQVVALTYILNSLFF) form a helical membrane-spanning segment.

This sequence belongs to the ATPase B chain family. In terms of assembly, F-type ATPases have 2 components, F(1) - the catalytic core - and F(0) - the membrane proton channel. F(1) has five subunits: alpha(3), beta(3), gamma(1), delta(1), epsilon(1). F(0) has four main subunits: a(1), b(1), b'(1) and c(10-14). The alpha and beta chains form an alternating ring which encloses part of the gamma chain. F(1) is attached to F(0) by a central stalk formed by the gamma and epsilon chains, while a peripheral stalk is formed by the delta, b and b' chains.

It localises to the cellular thylakoid membrane. Its function is as follows. F(1)F(0) ATP synthase produces ATP from ADP in the presence of a proton or sodium gradient. F-type ATPases consist of two structural domains, F(1) containing the extramembraneous catalytic core and F(0) containing the membrane proton channel, linked together by a central stalk and a peripheral stalk. During catalysis, ATP synthesis in the catalytic domain of F(1) is coupled via a rotary mechanism of the central stalk subunits to proton translocation. Component of the F(0) channel, it forms part of the peripheral stalk, linking F(1) to F(0). The b'-subunit is a diverged and duplicated form of b found in plants and photosynthetic bacteria. In Prochlorococcus marinus (strain MIT 9312), this protein is ATP synthase subunit b'.